The primary structure comprises 248 residues: Homeobox protein CHOX-CAD (248 aa).

The homeobox DNA-binding region spans 137–196 (KDKYRVVYTDHQRLELEKEFHYSRYITIRRKAELAAALGLTERQVKIWFQNRRAKERKVN). The tract at residues 192–248 (ERKVNKKKLQQQSQPTSTTTPTPPAVGTPGPMGTLCSGSAPSLVSSSPLTIKEEFMP) is disordered. 2 stretches are compositionally biased toward low complexity: residues 201–211 (QQQSQPTSTTT) and 228–240 (SGSAPSLVSSSPL).

It belongs to the Caudal homeobox family.

The protein localises to the nucleus. Its function is as follows. May play an important role during the early steps of organogenesis. This Gallus gallus (Chicken) protein is Homeobox protein CHOX-CAD (CHOX-CAD1).